A 362-amino-acid polypeptide reads, in one-letter code: Peptide chain release factor 1 (362 aa).

Position 237 is an N5-methylglutamine (glutamine 237).

This sequence belongs to the prokaryotic/mitochondrial release factor family. Post-translationally, methylated by PrmC. Methylation increases the termination efficiency of RF1.

The protein resides in the cytoplasm. Functionally, peptide chain release factor 1 directs the termination of translation in response to the peptide chain termination codons UAG and UAA. This is Peptide chain release factor 1 from Vibrio parahaemolyticus serotype O3:K6 (strain RIMD 2210633).